A 400-amino-acid polypeptide reads, in one-letter code: Na(+)/H(+) antiporter NhaA (400 aa).

A run of 11 helical transmembrane segments spans residues F10–I30, A60–L80, I95–F115, G126–G146, V155–F175, N178–L198, V218–I238, G265–G285, I295–F315, A334–A354, and L364–T384.

It belongs to the NhaA Na(+)/H(+) (TC 2.A.33) antiporter family.

Its subcellular location is the cell inner membrane. The catalysed reaction is Na(+)(in) + 2 H(+)(out) = Na(+)(out) + 2 H(+)(in). Its function is as follows. Na(+)/H(+) antiporter that extrudes sodium in exchange for external protons. This is Na(+)/H(+) antiporter NhaA from Psychrobacter cryohalolentis (strain ATCC BAA-1226 / DSM 17306 / VKM B-2378 / K5).